The chain runs to 496 residues: UDP-N-acetylmuramate--L-alanine ligase (496 aa).

Residue 122–128 (GTHGKTT) participates in ATP binding.

This sequence belongs to the MurCDEF family.

Its subcellular location is the cytoplasm. The enzyme catalyses UDP-N-acetyl-alpha-D-muramate + L-alanine + ATP = UDP-N-acetyl-alpha-D-muramoyl-L-alanine + ADP + phosphate + H(+). The protein operates within cell wall biogenesis; peptidoglycan biosynthesis. Its function is as follows. Cell wall formation. In Mycobacterium avium (strain 104), this protein is UDP-N-acetylmuramate--L-alanine ligase.